The chain runs to 77 residues: Acyl carrier protein homolog (77 aa).

Residues 1–76 enclose the Carrier domain; sequence MSINIKDLIM…DLINAFEDVL (76 aa). Position 36 is an O-(pantetheine 4'-phosphoryl)serine (serine 36).

In terms of processing, 4'-phosphopantetheine is transferred from CoA to a specific serine of the apo-ACP-like protein.

It functions in the pathway lipid metabolism; fatty acid biosynthesis. Functionally, carrier of the growing fatty acid chain in fatty acid biosynthesis. The chain is Acyl carrier protein homolog from Ureaplasma parvum serovar 3 (strain ATCC 700970).